Here is a 393-residue protein sequence, read N- to C-terminus: S-adenosylmethionine synthase 4 (393 aa).

Glutamate 9 is a binding site for Mg(2+). Histidine 15 serves as a coordination point for ATP. Glutamate 43 contacts K(+). Residues glutamate 56 and glutamine 99 each coordinate L-methionine. ATP is bound by residues 167–169 (DGK), 235–238 (SGRF), aspartate 246, 252–253 (RK), alanine 269, lysine 273, and lysine 277. Aspartate 246 lines the L-methionine pocket. Lysine 277 provides a ligand contact to L-methionine.

It belongs to the AdoMet synthase family. As to quaternary structure, homotetramer. Mn(2+) is required as a cofactor. It depends on Mg(2+) as a cofactor. The cofactor is Co(2+). K(+) serves as cofactor. In terms of tissue distribution, detected in trichomes (at the protein level).

The protein resides in the cytoplasm. It catalyses the reaction L-methionine + ATP + H2O = S-adenosyl-L-methionine + phosphate + diphosphate. Its pathway is amino-acid biosynthesis; S-adenosyl-L-methionine biosynthesis; S-adenosyl-L-methionine from L-methionine: step 1/1. Catalyzes the formation of S-adenosylmethionine from methionine and ATP. The reaction comprises two steps that are both catalyzed by the same enzyme: formation of S-adenosylmethionine (AdoMet) and triphosphate, and subsequent hydrolysis of the triphosphate. This Arabidopsis thaliana (Mouse-ear cress) protein is S-adenosylmethionine synthase 4 (METK4).